The sequence spans 551 residues: Non-neuronal cytoplasmic intermediate filament protein A (551 aa).

An N-acetylthreonine modification is found at Thr1. Residues 1–54 (TSKISTTYEEEGRQSKIQPRAFVITRSGPTSRSSSYSARQSYGSRSSITPGVYQ) are disordered. The head stretch occupies residues 1-74 (TSKISTTYEE…RGTREKEKRE (74 aa)). The span at 25–47 (TRSGPTSRSSSYSARQSYGSRSS) shows a compositional bias: low complexity. Positions 71 to 423 (EKREMQNLNE…KLLEGEESRV (353 aa)) constitute an IF rod domain. The segment at 75–106 (MQNLNERLAGYIEKVHFLDAQVKKLEAENXXX) is coil 1A. The interval 107-120 (XXXXXXXXXXXXXX) is linker 1. The segment at 121–258 (XXXXXXXXXX…XXXXXXXXXX (138 aa)) is coil 1B. The interval 259-275 (XXXXXXXXMDYAEFWKS) is linker 12. The coil 2 stretch occupies residues 276 to 423 (ELSKCVRDIQ…KLLEGEESRV (148 aa)). The tract at residues 424-551 (GLRSLVEQAI…IADMFSLGVG (128 aa)) is tail. Residues 454 to 551 (GSMTVQRSSK…IADMFSLGVG (98 aa)) form the LTD domain.

Belongs to the intermediate filament family. In terms of assembly, can form homomers.

The protein resides in the cytoplasm. Functionally, epithelial intermediate filament protein. This Helix pomatia (Roman snail) protein is Non-neuronal cytoplasmic intermediate filament protein A.